The chain runs to 308 residues: Probable very-long-chain enoyl-CoA reductase art-1 (308 aa).

The region spanning 7-85 (VYDAKRTDNL…VLYVRDLGPQ (79 aa)) is the Ubiquitin-like domain. A run of 4 helical transmembrane segments spans residues 112–132 (FIYG…IAFF), 169–189 (WGFA…PPAF), 194–214 (VYFG…IHIL), and 255–275 (WIFF…TAGF).

It belongs to the steroid 5-alpha reductase family.

The protein localises to the endoplasmic reticulum membrane. It catalyses the reaction a very-long-chain 2,3-saturated fatty acyl-CoA + NADP(+) = a very-long-chain (2E)-enoyl-CoA + NADPH + H(+). Its pathway is lipid metabolism; fatty acid biosynthesis. In terms of biological role, catalyzes the last of the four reactions of the long-chain fatty acids elongation cycle. This endoplasmic reticulum-bound enzymatic process, allows the addition of 2 carbons to the chain of long- and very long-chain fatty acids/VLCFAs per cycle. This enzyme reduces the trans-2,3-enoyl-CoA fatty acid intermediate to an acyl-CoA that can be further elongated by entering a new cycle of elongation. Thereby, it participates in the production of VLCFAs of different chain lengths that are involved in multiple biological processes as precursors of membrane lipids and lipid mediators. The protein is Probable very-long-chain enoyl-CoA reductase art-1 (art-1) of Caenorhabditis elegans.